The chain runs to 93 residues: uncharacterized protein (93 aa).

The N-terminal stretch at 1–22 (MSIPNLSSVTQLLSIATGLVST) is a signal peptide. Residue asparagine 5 is glycosylated (N-linked (GlcNAc...) asparagine; by host).

This is an uncharacterized protein from Invertebrate iridescent virus 6 (IIV-6).